Consider the following 145-residue polypeptide: METSDELKQRIGELSYEVTQHAATESPFTGEYDDFFEKGIYVDIVSGEVLFSSLDKFNSGCGWPAFSKPIENRMVTNHDDSSYGMRRVEVKSREAGSHLGHVFSDGPKEAGGLRYCINSAALKFIPYDQMEKEGYAQWLTLFDET.

Residues 4-127 enclose the MsrB domain; that stretch reads SDELKQRIGE…NSAALKFIPY (124 aa). Cys116 serves as the catalytic Nucleophile.

This sequence belongs to the MsrB Met sulfoxide reductase family.

It catalyses the reaction L-methionyl-[protein] + [thioredoxin]-disulfide + H2O = L-methionyl-(R)-S-oxide-[protein] + [thioredoxin]-dithiol. This Streptococcus pyogenes serotype M3 (strain ATCC BAA-595 / MGAS315) protein is Peptide methionine sulfoxide reductase MsrB.